We begin with the raw amino-acid sequence, 268 residues long: Small ribosomal subunit protein uS3 (268 aa).

The region spanning 40–110 (IRNLFFINYR…KLDLTINEIG (71 aa)) is the KH type-2 domain.

The protein belongs to the universal ribosomal protein uS3 family. In terms of assembly, part of the 30S ribosomal subunit. Forms a tight complex with proteins S10 and S14.

In terms of biological role, binds the lower part of the 30S subunit head. Binds mRNA in the 70S ribosome, positioning it for translation. This Mycoplasma genitalium (strain ATCC 33530 / DSM 19775 / NCTC 10195 / G37) (Mycoplasmoides genitalium) protein is Small ribosomal subunit protein uS3.